Reading from the N-terminus, the 108-residue chain is MLKTTLLFFVTALCEIIGCFLPWLWIKRGASVWWLLPAAASLALFVWLLTLHPAASGRVYAAYGGVYVCTALLWLRVVDGVRLTVYDWCGALIALCGMLIIVVGWGRT.

The Periplasmic segment spans residues 1–5 (MLKTT). A helical transmembrane segment spans residues 6 to 26 (LLFFVTALCEIIGCFLPWLWI). Residues 27 to 30 (KRGA) lie on the Cytoplasmic side of the membrane. A helical transmembrane segment spans residues 31–51 (SVWWLLPAAASLALFVWLLTL). The Periplasmic segment spans residues 52–60 (HPAASGRVY). Residues 61-81 (AAYGGVYVCTALLWLRVVDGV) traverse the membrane as a helical segment. Topologically, residues 82 to 84 (RLT) are cytoplasmic. A helical membrane pass occupies residues 85-105 (VYDWCGALIALCGMLIIVVGW). At 106-108 (GRT) the chain is on the periplasmic side.

Belongs to the UPF0060 family.

It is found in the cell inner membrane. The sequence is that of UPF0060 membrane protein YnfA from Salmonella paratyphi A (strain ATCC 9150 / SARB42).